A 347-amino-acid polypeptide reads, in one-letter code: DNA-directed RNA polymerase subunit alpha (347 aa).

Residues M1–N226 form an alpha N-terminal domain (alpha-NTD) region. Residues A241–L347 are alpha C-terminal domain (alpha-CTD).

The protein belongs to the RNA polymerase alpha chain family. As to quaternary structure, homodimer. The RNAP catalytic core consists of 2 alpha, 1 beta, 1 beta' and 1 omega subunit. When a sigma factor is associated with the core the holoenzyme is formed, which can initiate transcription.

It carries out the reaction RNA(n) + a ribonucleoside 5'-triphosphate = RNA(n+1) + diphosphate. Functionally, DNA-dependent RNA polymerase catalyzes the transcription of DNA into RNA using the four ribonucleoside triphosphates as substrates. The polypeptide is DNA-directed RNA polymerase subunit alpha (Mycobacterium avium (strain 104)).